The sequence spans 500 residues: TBC1 domain family member 10A (500 aa).

The span at 1 to 10 shows a compositional bias: basic and acidic residues; that stretch reads MAKSSRENGP. The tract at residues 1–45 is disordered; it reads MAKSSRENGPREPAAGGSLSGTRESLAQGPDAATADELSSLGSDS. A phosphoserine mark is found at Ser39, Ser40, and Ser45. In terms of domain architecture, Rab-GAP TBC spans 111 to 299; sequence GIPPSLRGRA…RVWDMFFCEG (189 aa). Disordered stretches follow at residues 396–415 and 420–500; these read AEPGPRPALQPSPSIRLPPD and SSKA…DTYL. Ser407 bears the Phosphoserine mark. The span at 438 to 453 shows a compositional bias: polar residues; it reads TSAQLDKSPGLSQATV. The residue at position 477 (Thr477) is a Phosphothreonine. A binding to the PDZ domain of EBP50 region spans residues 497–500; it reads DTYL.

As to quaternary structure, binds to the first PDZ domain of NHERF1 and NHERF2. As to expression, expressed in most tissues, except for skeletal muscle.

The protein localises to the cell projection. It is found in the microvillus. Functionally, GTPase-activating protein (GAP) specific for RAB27A and RAB35. Does not show GAP activity for RAB2A, RAB3A and RAB4A. The sequence is that of TBC1 domain family member 10A (Tbc1d10a) from Mus musculus (Mouse).